The primary structure comprises 367 residues: Beta sliding clamp (367 aa).

Belongs to the beta sliding clamp family. In terms of assembly, forms a ring-shaped head-to-tail homodimer around DNA which binds and tethers DNA polymerases and other proteins to the DNA. The DNA replisome complex has a single clamp-loading complex (3 tau and 1 each of delta, delta', psi and chi subunits) which binds 3 Pol III cores (1 core on the leading strand and 2 on the lagging strand) each with a beta sliding clamp dimer. Additional proteins in the replisome are other copies of gamma, psi and chi, Ssb, DNA helicase and RNA primase.

The protein localises to the cytoplasm. Functionally, confers DNA tethering and processivity to DNA polymerases and other proteins. Acts as a clamp, forming a ring around DNA (a reaction catalyzed by the clamp-loading complex) which diffuses in an ATP-independent manner freely and bidirectionally along dsDNA. Initially characterized for its ability to contact the catalytic subunit of DNA polymerase III (Pol III), a complex, multichain enzyme responsible for most of the replicative synthesis in bacteria; Pol III exhibits 3'-5' exonuclease proofreading activity. The beta chain is required for initiation of replication as well as for processivity of DNA replication. This is Beta sliding clamp (dnaN) from Proteus mirabilis.